A 167-amino-acid polypeptide reads, in one-letter code: Putative pre-16S rRNA nuclease (167 aa).

The segment at 1–24 (MVLTQHRVPDRPGDPDQDPGRGRR) is disordered. Basic and acidic residues predominate over residues 7–21 (RVPDRPGDPDQDPGR).

Belongs to the YqgF nuclease family.

It localises to the cytoplasm. Functionally, could be a nuclease involved in processing of the 5'-end of pre-16S rRNA. The protein is Putative pre-16S rRNA nuclease of Mycolicibacterium paratuberculosis (strain ATCC BAA-968 / K-10) (Mycobacterium paratuberculosis).